The primary structure comprises 1196 residues: Cingulin (1196 aa).

Residues 7–354 (MAEPRGPVDH…LVMTSGSAKG (348 aa)) form a head region. The ZIM signature appears at 48 to 62 (ANTYGVAVRVQGIAG). The tract at residues 54 to 67 (AVRVQGIAGQPFVV) is interaction with TJP1/ZO1. A disordered region spans residues 82-105 (IKGTNNRGPPGALSSDSELPESTY). Serine 95, serine 96, serine 98, serine 135, serine 137, serine 140, serine 155, serine 165, and serine 214 each carry phosphoserine. A compositionally biased stretch (polar residues) spans 95 to 105 (SSDSELPESTY). The tract at residues 183-263 (NKFDSRQGGQ…NQGPLGGFSC (81 aa)) is disordered. Positions 218 to 231 (RLPRDTLDEREHQF) are enriched in basic and acidic residues. Positions 245-256 (MGNSKQSSQNQG) are enriched in polar residues. A Phosphoserine modification is found at serine 274. Residues 355–1150 (LTGQSELSQK…ARIKTLEKDS (796 aa)) adopt a coiled-coil conformation. An N6-acetyllysine modification is found at lysine 576. Residues 884–897 (AQRQAKEWATEAEK) are compositionally biased toward basic and acidic residues. Disordered regions lie at residues 884 to 906 (AQRQAKEWATEAEKNSGGLSRLQ), 1023 to 1061 (DLKSRLASSEGFQKPSASLSQLESQNQELQERLQAEERE), and 1149 to 1174 (DSWRKASRSAAESAQREGLSSDEEFD). Positions 1038–1050 (SASLSQLESQNQE) are enriched in low complexity. Basic and acidic residues predominate over residues 1051 to 1061 (LQERLQAEERE). The tail stretch occupies residues 1155–1196 (SRSAAESAQREGLSSDEEFDSVYDPSSIASLLTESNLQTSSC). A phosphoserine mark is found at serine 1168, serine 1169, and serine 1175.

The protein belongs to the cingulin family. In terms of assembly, homodimer. Interacts with TJP1/ZO1 and SPEF1.

It is found in the cell junction. Its subcellular location is the tight junction. Probably plays a role in the formation and regulation of the tight junction (TJ) paracellular permeability barrier. The sequence is that of Cingulin from Canis lupus familiaris (Dog).